Consider the following 334-residue polypeptide: MENSEEESVGVAPQEFRELVLLESSLLEGEPSVQAPEQSPGAPAGDNQMVKPLVICGPVEDWVPLAEVLHHPDTCEEGDEATMAELKVTEVVDVKNEGEEVKDQKQEGEQDQQPELEKNPEQACDSKDQQGIQRLPLSGGGPAERRSKMEELELLQLELSFVNARCSGAFARIKAKVAKMRRPHFDRRKTIIQGIPGFWAKAMMNHPQMSSIISNQDEDLLSYMLSLEVEEYNPGLRMCRMMFFFSENPYFRNDIVTKDYQLSIIGYKESDSSTIEWIGQAEHGYANCMQDTTRLTFFNWLCAHKFPGSNRIAEIIMDDLWPNPLYYYPKEDHS.

A Phosphoserine modification is found at serine 4. Disordered stretches follow at residues 27–46 and 96–146; these read LEGEPSVQAPEQSPGAPAGD and NEGE…AERR. 2 stretches are compositionally biased toward basic and acidic residues: residues 96–108 and 115–128; these read NEGEEVKDQKQEG and ELEKNPEQACDSKD.

The protein belongs to the nucleosome assembly protein (NAP) family. Phosphorylated. Testis.

Its subcellular location is the cytoplasm. It localises to the nucleus. In terms of biological role, may be involved in sperm differentiation and proliferation. This is Testis-specific Y-encoded protein 1 (Tspy1) from Rattus norvegicus (Rat).